The following is a 211-amino-acid chain: ATP phosphoribosyltransferase (211 aa).

It belongs to the ATP phosphoribosyltransferase family. Short subfamily. In terms of assembly, heteromultimer composed of HisG and HisZ subunits.

Its subcellular location is the cytoplasm. It carries out the reaction 1-(5-phospho-beta-D-ribosyl)-ATP + diphosphate = 5-phospho-alpha-D-ribose 1-diphosphate + ATP. It participates in amino-acid biosynthesis; L-histidine biosynthesis; L-histidine from 5-phospho-alpha-D-ribose 1-diphosphate: step 1/9. In terms of biological role, catalyzes the condensation of ATP and 5-phosphoribose 1-diphosphate to form N'-(5'-phosphoribosyl)-ATP (PR-ATP). Has a crucial role in the pathway because the rate of histidine biosynthesis seems to be controlled primarily by regulation of HisG enzymatic activity. This is ATP phosphoribosyltransferase (hisG) from Pseudomonas aeruginosa (strain ATCC 15692 / DSM 22644 / CIP 104116 / JCM 14847 / LMG 12228 / 1C / PRS 101 / PAO1).